The sequence spans 411 residues: MLDLKLLQNNFDEIAQKLKAKKVDENLLKELSDLFINLKKEKALLEEFQAFQNKFSKELATAQDKESLKAQLSQNKEKINAQSKIVNELEEKLGQIALAIPNTPDDCVPFGEDEDENVELKKVLTPPSFDFEIKEHHDLGEKLNWLDFTRGVKISQSRFCVLKNEGALLSRALVNYMIDFNRSRGFELVNVPFLVNGATMYGTGQLPKFKDDMYKVENDDLYLISTSEIPVTNLYSNEILTQEELPLKMTCYSACFRQEAGSAGKDTRGIIRQHQFEKVELVSICKPDQSELMFEEMLNCASDLLSSLGLAHRHLMLCTGDLGFSAAKTVDLEVWLPSQNKYREISSVSNCKDFQARRAKIRFKNDKGKNELVHTLNGSSLAVGRTLVAIMENYQEKDGNIRIPDVLRKYF.

226–228 (TSE) is a binding site for L-serine. 257 to 259 (RQE) serves as a coordination point for ATP. Glu280 is a binding site for L-serine. Residue 344-347 (EISS) participates in ATP binding. Position 379 (Ser379) interacts with L-serine.

The protein belongs to the class-II aminoacyl-tRNA synthetase family. Type-1 seryl-tRNA synthetase subfamily. In terms of assembly, homodimer. The tRNA molecule binds across the dimer.

It localises to the cytoplasm. It catalyses the reaction tRNA(Ser) + L-serine + ATP = L-seryl-tRNA(Ser) + AMP + diphosphate + H(+). The enzyme catalyses tRNA(Sec) + L-serine + ATP = L-seryl-tRNA(Sec) + AMP + diphosphate + H(+). It functions in the pathway aminoacyl-tRNA biosynthesis; selenocysteinyl-tRNA(Sec) biosynthesis; L-seryl-tRNA(Sec) from L-serine and tRNA(Sec): step 1/1. In terms of biological role, catalyzes the attachment of serine to tRNA(Ser). Is also able to aminoacylate tRNA(Sec) with serine, to form the misacylated tRNA L-seryl-tRNA(Sec), which will be further converted into selenocysteinyl-tRNA(Sec). This chain is Serine--tRNA ligase, found in Campylobacter lari (strain RM2100 / D67 / ATCC BAA-1060).